A 1025-amino-acid polypeptide reads, in one-letter code: MATAFWLLLFLLGSLHVLTAAQNSSQSEWPIHDNGLSKVVQWDHYSFYINGQRIFLFSGEFHYWRIPVPALWRDILEKIKAIGFTGFAFYSSWAYHAPNNQTVDFSTGARDITPIYDLAKELGMYIIVRPGPYVNAEASAGGFPLWLTTGAYGSTRNDDPRYTAAWEPYFAEVSEITSKYQVTDGHYTLCYQIENEYGQQWIGDPRDRNPNQTAIAYMELLQASARENGITVPLTGNDPNMNTKSWGSDWSDAGGNLDTVGLDSYPSCWSCDVSVCTGTNGEYVPYKVLDYYDYFQEVQPTMPFFMPEFQGGSYNPWDGPEGGCTEDTGADFANLFYRWNIGQRVSAMSLYMMFGGTNWGGIAAPVTASSYDYSAPISEDRSIGSKYYETKLLALFTRCAKDLTMTDRLGNGTQYTDNEAVIASELRNPDTNAAFYVTTHLDTTVGTDESFKLHVNTSKGALTIPRHGGTIRLNGHHSKIIVTDFNFGSETLLYSTAEVLTYAVFDRKPTLVLWVPTGESGEFAIKGAKSGSVAKCSGCSNIKFHRDSGSLTVAFTQGEGISVLQLDNGVRVVLLDRQKAYTFWAPALTDNPLVPEGESVLVSGPYLVRTARLARSTLTLRGDSKGETLEIFAPRKIKKVTWNGKAVEATRTSYGSLKAILAKPPSVELPTLNGWKYSDSLPERFPTYDDSGAAWVEIDANHMTTPNPNKPATLPVLYADEYGFHNGVRLWRGYFNSSASGVYLNIQGGAAFGWSAWLNGHFLGSHLGSASIQQANGTLDFPANTLNTEGTPNVLLVVHDDTGHDQTTGVLNPRGILEARLLSEASDNNDDDSPGFTHWRVAGTAGGESDLDPVRGVYNEDGLYAERVGWHLPGFDDSKWATVNGTSLSFTGATVRFFRTVIPPLSIPENTDVSISFVFSTPNVNNTSAGNTSAFRAQLFVNGYQYGRYNPYVGNQVVYPVPPGILDYNGENTIGVAVWAQTEAGARLNLDWRVNYVLGSSLDAGRLDLSFVAIAYVYIFECLQL.

The N-terminal stretch at 1-21 (MATAFWLLLFLLGSLHVLTAA) is a signal peptide. Asn-23 carries N-linked (GlcNAc...) asparagine glycosylation. Tyr-90 serves as a coordination point for substrate. N-linked (GlcNAc...) asparagine glycosylation occurs at Asn-100. The substrate site is built by Asn-135, Ala-136, Glu-137, and Asn-195. The active-site Proton donor is the Glu-196. Residue Asn-211 is glycosylated (N-linked (GlcNAc...) asparagine). Tyr-265 serves as a coordination point for substrate. Cys-271 and Cys-324 are joined by a disulfide. The active-site Nucleophile is Glu-308. Tyr-373 lines the substrate pocket. Asn-411, Asn-456, Asn-736, Asn-776, Asn-884, Asn-925, and Asn-926 each carry an N-linked (GlcNAc...) asparagine glycan.

This sequence belongs to the glycosyl hydrolase 35 family.

It is found in the secreted. It catalyses the reaction Hydrolysis of terminal non-reducing beta-D-galactose residues in beta-D-galactosides.. In terms of biological role, cleaves beta-linked terminal galactosyl residues from gangliosides, glycoproteins, and glycosaminoglycans. The chain is Probable beta-galactosidase B (lacB) from Emericella nidulans (strain FGSC A4 / ATCC 38163 / CBS 112.46 / NRRL 194 / M139) (Aspergillus nidulans).